A 423-amino-acid polypeptide reads, in one-letter code: Serine hydroxymethyltransferase (423 aa).

Residues leucine 118 and 122–124 each bind (6S)-5,6,7,8-tetrahydrofolate; that span reads GHL. Lysine 227 carries the N6-(pyridoxal phosphate)lysine modification. 351–353 is a (6S)-5,6,7,8-tetrahydrofolate binding site; that stretch reads SPF.

The protein belongs to the SHMT family. Homodimer. Pyridoxal 5'-phosphate serves as cofactor.

The protein resides in the cytoplasm. The enzyme catalyses (6R)-5,10-methylene-5,6,7,8-tetrahydrofolate + glycine + H2O = (6S)-5,6,7,8-tetrahydrofolate + L-serine. It participates in one-carbon metabolism; tetrahydrofolate interconversion. The protein operates within amino-acid biosynthesis; glycine biosynthesis; glycine from L-serine: step 1/1. Catalyzes the reversible interconversion of serine and glycine with tetrahydrofolate (THF) serving as the one-carbon carrier. This reaction serves as the major source of one-carbon groups required for the biosynthesis of purines, thymidylate, methionine, and other important biomolecules. Also exhibits THF-independent aldolase activity toward beta-hydroxyamino acids, producing glycine and aldehydes, via a retro-aldol mechanism. This Petrotoga mobilis (strain DSM 10674 / SJ95) protein is Serine hydroxymethyltransferase.